Reading from the N-terminus, the 275-residue chain is COP9 signalosome complex subunit 7a (275 aa).

Residue S2 is modified to N-acetylserine. The PCI domain maps to 2–159; the sequence is SAEVKVTGQN…QRLEVDYSIG (158 aa). Residues 185-233 are a coiled coil; sequence LSGIEEQVSRANQHKEQQLGLKQQIESEVANLKKTIKVTTAAAAAATSQ. The disordered stretch occupies residues 228–275; it reads AAATSQDPEQHLTELREPASGTNQRQPSKKASKGKGLRGSAKIWSKSN. A compositionally biased stretch (basic and acidic residues) spans 235–244; sequence PEQHLTELRE. Basic residues predominate over residues 254–263; sequence PSKKASKGKG.

The protein belongs to the CSN7/EIF3M family. CSN7 subfamily. Component of the CSN complex, composed of COPS1/GPS1, COPS2, COPS3, COPS4, COPS5, COPS6, COPS7 (COPS7A or COPS7B), COPS8 and COPS9. In the complex, it probably interacts directly with COPS1, COPS2, COPS4, COPS5, COPS6 and COPS8. Interacts with PMF1. Interacts with the translation initiation factor EIF3S6. Interacts with CK2 and PKD. Interacts directly with ID3. In terms of processing, phosphorylated by CK2 and PKD kinases.

The protein resides in the cytoplasm. Its subcellular location is the nucleus. Its function is as follows. Component of the COP9 signalosome complex (CSN), a complex involved in various cellular and developmental processes. The CSN complex is an essential regulator of the ubiquitin (Ubl) conjugation pathway by mediating the deneddylation of the cullin subunits of SCF-type E3 ligase complexes, leading to decrease the Ubl ligase activity of SCF-type complexes such as SCF, CSA or DDB2. The complex is also involved in phosphorylation of p53/TP53, JUN, I-kappa-B-alpha/NFKBIA, ITPK1 and IRF8/ICSBP, possibly via its association with CK2 and PKD kinases. CSN-dependent phosphorylation of TP53 and JUN promotes and protects degradation by the Ubl system, respectively. The protein is COP9 signalosome complex subunit 7a (Cops7a) of Mus musculus (Mouse).